The sequence spans 879 residues: DNA mismatch repair protein MutS (879 aa).

ATP is bound at residue 629-636; the sequence is GPNMGGKS.

It belongs to the DNA mismatch repair MutS family.

Its function is as follows. This protein is involved in the repair of mismatches in DNA. It is possible that it carries out the mismatch recognition step. This protein has a weak ATPase activity. The sequence is that of DNA mismatch repair protein MutS from Erythrobacter litoralis (strain HTCC2594).